We begin with the raw amino-acid sequence, 299 residues long: Lipoyl synthase (299 aa).

Residues Cys-34, Cys-39, Cys-45, Cys-60, Cys-64, Cys-67, and Ser-273 each contribute to the [4Fe-4S] cluster site. Residues 46-262 form the Radical SAM core domain; that stretch reads WNKKHATVMI…KYVAYSKGFL (217 aa).

It belongs to the radical SAM superfamily. Lipoyl synthase family. [4Fe-4S] cluster serves as cofactor.

It localises to the cytoplasm. The catalysed reaction is [[Fe-S] cluster scaffold protein carrying a second [4Fe-4S](2+) cluster] + N(6)-octanoyl-L-lysyl-[protein] + 2 oxidized [2Fe-2S]-[ferredoxin] + 2 S-adenosyl-L-methionine + 4 H(+) = [[Fe-S] cluster scaffold protein] + N(6)-[(R)-dihydrolipoyl]-L-lysyl-[protein] + 4 Fe(3+) + 2 hydrogen sulfide + 2 5'-deoxyadenosine + 2 L-methionine + 2 reduced [2Fe-2S]-[ferredoxin]. It participates in protein modification; protein lipoylation via endogenous pathway; protein N(6)-(lipoyl)lysine from octanoyl-[acyl-carrier-protein]: step 2/2. Functionally, catalyzes the radical-mediated insertion of two sulfur atoms into the C-6 and C-8 positions of the octanoyl moiety bound to the lipoyl domains of lipoate-dependent enzymes, thereby converting the octanoylated domains into lipoylated derivatives. The polypeptide is Lipoyl synthase (Ehrlichia canis (strain Jake)).